Consider the following 266-residue polypeptide: Glucosamine-6-phosphate deaminase (266 aa).

Asp-72 (proton acceptor; for enolization step) is an active-site residue. Residue Asp-141 is the For ring-opening step of the active site. Residue His-143 is the Proton acceptor; for ring-opening step of the active site. The For ring-opening step role is filled by Glu-148.

It belongs to the glucosamine/galactosamine-6-phosphate isomerase family. NagB subfamily. In terms of assembly, homohexamer; trimer of disulfide-linked dimers.

It carries out the reaction alpha-D-glucosamine 6-phosphate + H2O = beta-D-fructose 6-phosphate + NH4(+). Its pathway is amino-sugar metabolism; N-acetylneuraminate degradation; D-fructose 6-phosphate from N-acetylneuraminate: step 5/5. Allosterically activated by N-acetylglucosamine 6-phosphate (GlcNAc6P). Its function is as follows. Catalyzes the reversible isomerization-deamination of glucosamine 6-phosphate (GlcN6P) to form fructose 6-phosphate (Fru6P) and ammonium ion. The polypeptide is Glucosamine-6-phosphate deaminase (Shigella flexneri serotype 5b (strain 8401)).